The primary structure comprises 575 residues: Chaperonin 60 subunit alpha 2, chloroplastic (575 aa).

Positions 1 to 18 (MFAVSPSSFSPTTISPRR) are enriched in low complexity. The interval 1–27 (MFAVSPSSFSPTTISPRRSGQRNEPRK) is disordered. The N-terminal 32 residues, 1–32 (MFAVSPSSFSPTTISPRRSGQRNEPRKFSVVR), are a transit peptide targeting the chloroplast.

Belongs to the chaperonin (HSP60) family. As to quaternary structure, part of the Cpn60 complex composed of 7 alpha and 7 beta subunits.

The protein resides in the plastid. The protein localises to the chloroplast. Its function is as follows. Involved in protein assisted folding. This is Chaperonin 60 subunit alpha 2, chloroplastic (CPN60A2) from Arabidopsis thaliana (Mouse-ear cress).